Here is a 167-residue protein sequence, read N- to C-terminus: Bacterial non-heme ferritin (167 aa).

Residues 1–145 (MLSKDIIKLL…DILDKIELIG (145 aa)) enclose the Ferritin-like diiron domain. The Fe cation site is built by Glu17, Glu50, His53, Glu94, and Gln127.

Belongs to the ferritin family. Prokaryotic subfamily. In terms of assembly, homooligomer of 24 subunits that assemble into a spherical protein shell (12 +/- 1 nM diameter) that can sequester at least 2000 iron atoms.

It localises to the cytoplasm. The enzyme catalyses 4 Fe(2+) + O2 + 6 H2O = 4 iron(III) oxide-hydroxide + 12 H(+). Iron-storage protein. The sequence is that of Bacterial non-heme ferritin (ftnA) from Helicobacter pylori (strain ATCC 700392 / 26695) (Campylobacter pylori).